We begin with the raw amino-acid sequence, 186 residues long: Probable chorismate pyruvate-lyase (186 aa).

The substrate site is built by R80, L118, and E170.

Belongs to the UbiC family.

The protein localises to the cytoplasm. The catalysed reaction is chorismate = 4-hydroxybenzoate + pyruvate. The protein operates within cofactor biosynthesis; ubiquinone biosynthesis. Its function is as follows. Removes the pyruvyl group from chorismate, with concomitant aromatization of the ring, to provide 4-hydroxybenzoate (4HB) for the ubiquinone pathway. The protein is Probable chorismate pyruvate-lyase of Pseudomonas syringae pv. tomato (strain ATCC BAA-871 / DC3000).